Reading from the N-terminus, the 421-residue chain is C2H2 type master regulator of conidiophore development brlA (421 aa).

Residues 228–242 show a composition bias toward polar residues; sequence THSPTTPLRSCSIGT. The interval 228–247 is disordered; it reads THSPTTPLRSCSIGTASGPD. C2H2-type zinc fingers lie at residues 309–333 and 339–364; these read FKCK…MKSH and HVCW…TKTH. Over residues 361-370 the composition is skewed to basic residues; that stretch reads TKTHSKRGGR. The tract at residues 361-421 is disordered; that stretch reads TKTHSKRGGR…REYSVDGLDD (61 aa).

The protein resides in the nucleus. BrlA, abaA and wetA are pivotal regulators of conidiophore development and conidium maturation. They act individually and together to regulate their own expression and that of numerous other sporulation-specific genes. Binds promoters of target genes at brlA response elements (BREs) containing the conserved sequence 5'-(C/A)(A/G)AGGG(G/A)-3'. This Aspergillus parasiticus (strain ATCC 56775 / NRRL 5862 / SRRC 143 / SU-1) protein is C2H2 type master regulator of conidiophore development brlA.